A 406-amino-acid polypeptide reads, in one-letter code: CCA-adding enzyme (406 aa).

Residues Gly32 and Arg35 each contribute to the ATP site. The CTP site is built by Gly32 and Arg35. Mg(2+) contacts are provided by Asp45 and Asp47. The ATP site is built by Arg116, Asp159, Arg162, Arg165, and Arg168. Residues Arg116, Asp159, Arg162, Arg165, and Arg168 each contribute to the CTP site.

Belongs to the tRNA nucleotidyltransferase/poly(A) polymerase family. Bacterial CCA-adding enzyme type 3 subfamily. In terms of assembly, homodimer. Mg(2+) is required as a cofactor.

It catalyses the reaction a tRNA precursor + 2 CTP + ATP = a tRNA with a 3' CCA end + 3 diphosphate. The enzyme catalyses a tRNA with a 3' CCA end + 2 CTP + ATP = a tRNA with a 3' CCACCA end + 3 diphosphate. In terms of biological role, catalyzes the addition and repair of the essential 3'-terminal CCA sequence in tRNAs without using a nucleic acid template. Adds these three nucleotides in the order of C, C, and A to the tRNA nucleotide-73, using CTP and ATP as substrates and producing inorganic pyrophosphate. tRNA 3'-terminal CCA addition is required both for tRNA processing and repair. Also involved in tRNA surveillance by mediating tandem CCA addition to generate a CCACCA at the 3' terminus of unstable tRNAs. While stable tRNAs receive only 3'-terminal CCA, unstable tRNAs are marked with CCACCA and rapidly degraded. The protein is CCA-adding enzyme of Enterococcus faecalis (strain ATCC 700802 / V583).